Here is a 275-residue protein sequence, read N- to C-terminus: Large ribosomal subunit protein uL2 (275 aa).

Positions 222–275 (GKVMNPVDHPHGGGEGRNPIGRNPSTPWGKLAMGVKTRGNKKSDRLIVKRRNKK) are disordered.

This sequence belongs to the universal ribosomal protein uL2 family. As to quaternary structure, part of the 50S ribosomal subunit. Forms a bridge to the 30S subunit in the 70S ribosome.

In terms of biological role, one of the primary rRNA binding proteins. Required for association of the 30S and 50S subunits to form the 70S ribosome, for tRNA binding and peptide bond formation. It has been suggested to have peptidyltransferase activity; this is somewhat controversial. Makes several contacts with the 16S rRNA in the 70S ribosome. This is Large ribosomal subunit protein uL2 from Desulforamulus reducens (strain ATCC BAA-1160 / DSM 100696 / MI-1) (Desulfotomaculum reducens).